Consider the following 186-residue polypeptide: ATP-dependent protease subunit HslV (186 aa).

Residue Thr14 is part of the active site. Na(+)-binding residues include Ala168, Cys171, and Thr174.

It belongs to the peptidase T1B family. HslV subfamily. In terms of assembly, a double ring-shaped homohexamer of HslV is capped on each side by a ring-shaped HslU homohexamer. The assembly of the HslU/HslV complex is dependent on binding of ATP.

The protein resides in the cytoplasm. The enzyme catalyses ATP-dependent cleavage of peptide bonds with broad specificity.. With respect to regulation, allosterically activated by HslU binding. Functionally, protease subunit of a proteasome-like degradation complex believed to be a general protein degrading machinery. This chain is ATP-dependent protease subunit HslV, found in Methylorubrum extorquens (strain CM4 / NCIMB 13688) (Methylobacterium extorquens).